A 105-amino-acid chain; its full sequence is Large ribosomal subunit protein eL30 (105 aa).

The protein belongs to the eukaryotic ribosomal protein eL30 family.

In Methanococcus vannielii (strain ATCC 35089 / DSM 1224 / JCM 13029 / OCM 148 / SB), this protein is Large ribosomal subunit protein eL30 (rpl30e).